Consider the following 120-residue polypeptide: Seripauperin-4 (120 aa).

A helical transmembrane segment spans residues 7 to 24 (IAAGVAAIAATASATTTI).

The protein belongs to the SRP1/TIP1 family. Seripauperin subfamily.

It is found in the membrane. The chain is Seripauperin-4 (PAU4) from Saccharomyces cerevisiae (strain ATCC 204508 / S288c) (Baker's yeast).